Here is a 414-residue protein sequence, read N- to C-terminus: Histidine--tRNA ligase (414 aa).

It belongs to the class-II aminoacyl-tRNA synthetase family. Homodimer.

The protein localises to the cytoplasm. The enzyme catalyses tRNA(His) + L-histidine + ATP = L-histidyl-tRNA(His) + AMP + diphosphate + H(+). This Solibacter usitatus (strain Ellin6076) protein is Histidine--tRNA ligase.